The primary structure comprises 164 residues: MEMTNAQRLILSNQYKMMTMLDPTNAERYRRLQTIIERGYGLQMRELDREFGELTEETCRTIIDIMEMYHALHVSWANLKDTQAIDERRVTFLGFDAATEARYLGYVRFMVNIEGRYTHFDAGTHGFNAQTPMWEKYQRMLNVWHACPRQYHLSANEINQIINA.

The protein belongs to the UPF0304 family.

The polypeptide is UPF0304 protein YfbU (Salmonella choleraesuis (strain SC-B67)).